Here is a 288-residue protein sequence, read N- to C-terminus: Proteasome subunit beta (288 aa).

A propeptide spans 1 to 57 (removed in mature form; by autocatalysis); that stretch reads MTVDGQVGRWPVSAIPAAYMRPGSGSFTEFLAGAEPHLLPGRAGAQPAGAAPAVPHG. Thr-58 acts as the Nucleophile in catalysis.

The protein belongs to the peptidase T1B family. In terms of assembly, the 20S proteasome core is composed of 14 alpha and 14 beta subunits that assemble into four stacked heptameric rings, resulting in a barrel-shaped structure. The two inner rings, each composed of seven catalytic beta subunits, are sandwiched by two outer rings, each composed of seven alpha subunits. The catalytic chamber with the active sites is on the inside of the barrel. Has a gated structure, the ends of the cylinder being occluded by the N-termini of the alpha-subunits. Is capped by the proteasome-associated ATPase, ARC.

The protein resides in the cytoplasm. It catalyses the reaction Cleavage of peptide bonds with very broad specificity.. It functions in the pathway protein degradation; proteasomal Pup-dependent pathway. The formation of the proteasomal ATPase ARC-20S proteasome complex, likely via the docking of the C-termini of ARC into the intersubunit pockets in the alpha-rings, may trigger opening of the gate for substrate entry. Interconversion between the open-gate and close-gate conformations leads to a dynamic regulation of the 20S proteasome proteolysis activity. Functionally, component of the proteasome core, a large protease complex with broad specificity involved in protein degradation. The protein is Proteasome subunit beta of Nakamurella multipartita (strain ATCC 700099 / DSM 44233 / CIP 104796 / JCM 9543 / NBRC 105858 / Y-104) (Microsphaera multipartita).